A 544-amino-acid chain; its full sequence is MGPAARLAALLAVLAFRAGDPAEVAARGDTFSALTSVARALAPERRLLGLLRRYLRGEEARLRDLTRFYHKVLSLHEDSATPVSNPLLAFTLIKRLQSDWKNVVHSLEASENIRALKDGYERVEQDLPAFEDLEGAARALMRLQDVYMLNVKGLARGVFQRVTGSAVTDLYSPRRLFSLTGDDCFQVGKVAYDMGDYYHAIPWLEEAVSLFRGSYGEWKTEDEASLEDALDHLAFAYFQAGNVLCALNLSREFLLYSPDNKRVARNVLKYEKLLAESPNQAVAETVMQRPNVPHLQTRDTYEGLCQTLGSQPTHYRIPSLYCSYETSSSPYLLLQPVRKEVIHLEPYVVLYHDFVSDAEAQTIRGLAEPWLQRSVVASGEKQLPVEYRISKSAWLKDTVDPVLVTLDHRIAALTGLDVQPPYAEYLQVVNYGIGGHYEPHFDHATSPSSPLYRMNSGNRVATFMIYLSSVEAGGATAFIYGNFSVPVVKNAALFWWNLHRSGEGDGDTLHAACPVLVGDKWVANKWIHEYGQEFRRPCSSRPED.

Residues 1–19 (MGPAARLAALLAVLAFRAG) form the signal peptide. Residues 107–131 (LEASENIRALKDGYERVEQDLPAFE) are a coiled coil. A TPR repeat occupies 227–260 (EDALDHLAFAYFQAGNVLCALNLSREFLLYSPDN). Asparagine 248 is a glycosylation site (N-linked (GlcNAc...) asparagine). The Fe2OG dioxygenase domain maps to 422-529 (YAEYLQVVNY…KWVANKWIHE (108 aa)). Positions 440 and 442 each coordinate Fe cation. Residue asparagine 482 is glycosylated (N-linked (GlcNAc...) asparagine). Histidine 510 lines the Fe cation pocket. A 2-oxoglutarate-binding site is contributed by lysine 520.

This sequence belongs to the P4HA family. In terms of assembly, heterotetramer of two alpha-3 chains and two beta chains (the beta chain is the multi-functional PDI). Requires Fe(2+) as cofactor. L-ascorbate is required as a cofactor. Post-translationally, N-glycosylation plays no role in the catalytic activity.

The protein resides in the endoplasmic reticulum lumen. It catalyses the reaction L-prolyl-[collagen] + 2-oxoglutarate + O2 = trans-4-hydroxy-L-prolyl-[collagen] + succinate + CO2. In terms of biological role, catalyzes the post-translational formation of 4-hydroxyproline in -Xaa-Pro-Gly- sequences in collagens and other proteins. In Bos taurus (Bovine), this protein is Prolyl 4-hydroxylase subunit alpha-3 (P4HA3).